We begin with the raw amino-acid sequence, 425 residues long: Glutamate-1-semialdehyde 2,1-aminomutase (425 aa).

Lysine 265 is modified (N6-(pyridoxal phosphate)lysine).

Belongs to the class-III pyridoxal-phosphate-dependent aminotransferase family. HemL subfamily. In terms of assembly, homodimer. Pyridoxal 5'-phosphate serves as cofactor.

The protein localises to the cytoplasm. It catalyses the reaction (S)-4-amino-5-oxopentanoate = 5-aminolevulinate. Its pathway is porphyrin-containing compound metabolism; protoporphyrin-IX biosynthesis; 5-aminolevulinate from L-glutamyl-tRNA(Glu): step 2/2. This Clostridium perfringens (strain 13 / Type A) protein is Glutamate-1-semialdehyde 2,1-aminomutase.